The following is an 887-amino-acid chain: Alanine--tRNA ligase (887 aa).

The Zn(2+) site is built by histidine 564, histidine 568, cysteine 676, and histidine 680.

The protein belongs to the class-II aminoacyl-tRNA synthetase family. Zn(2+) is required as a cofactor.

It is found in the cytoplasm. The enzyme catalyses tRNA(Ala) + L-alanine + ATP = L-alanyl-tRNA(Ala) + AMP + diphosphate. Its function is as follows. Catalyzes the attachment of alanine to tRNA(Ala) in a two-step reaction: alanine is first activated by ATP to form Ala-AMP and then transferred to the acceptor end of tRNA(Ala). Also edits incorrectly charged Ser-tRNA(Ala) and Gly-tRNA(Ala) via its editing domain. This is Alanine--tRNA ligase from Agrobacterium fabrum (strain C58 / ATCC 33970) (Agrobacterium tumefaciens (strain C58)).